Consider the following 392-residue polypeptide: Phospho-N-acetylmuramoyl-pentapeptide-transferase (392 aa).

Transmembrane regions (helical) follow at residues 28–48, 76–96, 101–121, 137–157, 181–201, 213–233, 268–288, 295–315, 320–340, and 369–389; these read IIAA…KLIA, TMGG…FADL, VWVM…DDWL, MVLQ…TWTL, WFNP…VVGT, GLAI…CYVA, GAEL…FLWF, VFMG…LAML, VVSA…MIQV, and KIIV…LLSL.

The protein belongs to the glycosyltransferase 4 family. MraY subfamily. Mg(2+) is required as a cofactor.

Its subcellular location is the cell inner membrane. It carries out the reaction UDP-N-acetyl-alpha-D-muramoyl-L-alanyl-gamma-D-glutamyl-meso-2,6-diaminopimeloyl-D-alanyl-D-alanine + di-trans,octa-cis-undecaprenyl phosphate = di-trans,octa-cis-undecaprenyl diphospho-N-acetyl-alpha-D-muramoyl-L-alanyl-D-glutamyl-meso-2,6-diaminopimeloyl-D-alanyl-D-alanine + UMP. It participates in cell wall biogenesis; peptidoglycan biosynthesis. Functionally, catalyzes the initial step of the lipid cycle reactions in the biosynthesis of the cell wall peptidoglycan: transfers peptidoglycan precursor phospho-MurNAc-pentapeptide from UDP-MurNAc-pentapeptide onto the lipid carrier undecaprenyl phosphate, yielding undecaprenyl-pyrophosphoryl-MurNAc-pentapeptide, known as lipid I. In Myxococcus xanthus (strain DK1622), this protein is Phospho-N-acetylmuramoyl-pentapeptide-transferase.